Reading from the N-terminus, the 273-residue chain is Dermonecrotic toxin LamSicTox-alphaIC1 (273 aa).

H5 is an active-site residue. Residues E25 and D27 each contribute to the Mg(2+) site. H41 acts as the Nucleophile in catalysis. Disulfide bonds link C45-C51 and C47-C190. D85 serves as a coordination point for Mg(2+).

It belongs to the arthropod phospholipase D family. Class II subfamily. The cofactor is Mg(2+). Expressed by the venom gland.

The protein localises to the secreted. The catalysed reaction is an N-(acyl)-sphingosylphosphocholine = an N-(acyl)-sphingosyl-1,3-cyclic phosphate + choline. The enzyme catalyses an N-(acyl)-sphingosylphosphoethanolamine = an N-(acyl)-sphingosyl-1,3-cyclic phosphate + ethanolamine. It carries out the reaction a 1-acyl-sn-glycero-3-phosphocholine = a 1-acyl-sn-glycero-2,3-cyclic phosphate + choline. It catalyses the reaction a 1-acyl-sn-glycero-3-phosphoethanolamine = a 1-acyl-sn-glycero-2,3-cyclic phosphate + ethanolamine. In terms of biological role, dermonecrotic toxins cleave the phosphodiester linkage between the phosphate and headgroup of certain phospholipids (sphingolipid and lysolipid substrates), forming an alcohol (often choline) and a cyclic phosphate. This toxin acts on sphingomyelin (SM). It may also act on ceramide phosphoethanolamine (CPE), lysophosphatidylcholine (LPC) and lysophosphatidylethanolamine (LPE), but not on lysophosphatidylserine (LPS), and lysophosphatidylglycerol (LPG). It acts by transphosphatidylation, releasing exclusively cyclic phosphate products as second products. Induces dermonecrosis, hemolysis, increased vascular permeability, edema, inflammatory response, and platelet aggregation. This is Dermonecrotic toxin LamSicTox-alphaIC1 from Loxosceles amazonica (Recluse spider).